The following is a 160-amino-acid chain: Large ribosomal subunit protein eL14 (160 aa).

The interval Ser-136 to Lys-160 is disordered. Positions Asp-146 to Lys-160 are enriched in basic and acidic residues.

It belongs to the eukaryotic ribosomal protein eL14 family.

In Drosophila virilis (Fruit fly), this protein is Large ribosomal subunit protein eL14 (RpL14).